The chain runs to 418 residues: Serine hydroxymethyltransferase (418 aa).

Residues L121 and 125–127 (GHL) each bind (6S)-5,6,7,8-tetrahydrofolate. K230 bears the N6-(pyridoxal phosphate)lysine mark. Residue 355-357 (SPF) participates in (6S)-5,6,7,8-tetrahydrofolate binding.

It belongs to the SHMT family. In terms of assembly, homodimer. Requires pyridoxal 5'-phosphate as cofactor.

The protein localises to the cytoplasm. The catalysed reaction is (6R)-5,10-methylene-5,6,7,8-tetrahydrofolate + glycine + H2O = (6S)-5,6,7,8-tetrahydrofolate + L-serine. It functions in the pathway one-carbon metabolism; tetrahydrofolate interconversion. The protein operates within amino-acid biosynthesis; glycine biosynthesis; glycine from L-serine: step 1/1. Catalyzes the reversible interconversion of serine and glycine with tetrahydrofolate (THF) serving as the one-carbon carrier. This reaction serves as the major source of one-carbon groups required for the biosynthesis of purines, thymidylate, methionine, and other important biomolecules. Also exhibits THF-independent aldolase activity toward beta-hydroxyamino acids, producing glycine and aldehydes, via a retro-aldol mechanism. This is Serine hydroxymethyltransferase from Streptococcus pyogenes serotype M1.